Consider the following 482-residue polypeptide: Probable cytosol aminopeptidase (482 aa).

Residues K251 and D256 each coordinate Mn(2+). K263 is an active-site residue. Positions 274, 333, and 335 each coordinate Mn(2+). The active site involves R337.

It belongs to the peptidase M17 family. The cofactor is Mn(2+).

Its subcellular location is the cytoplasm. It carries out the reaction Release of an N-terminal amino acid, Xaa-|-Yaa-, in which Xaa is preferably Leu, but may be other amino acids including Pro although not Arg or Lys, and Yaa may be Pro. Amino acid amides and methyl esters are also readily hydrolyzed, but rates on arylamides are exceedingly low.. It catalyses the reaction Release of an N-terminal amino acid, preferentially leucine, but not glutamic or aspartic acids.. Presumably involved in the processing and regular turnover of intracellular proteins. Catalyzes the removal of unsubstituted N-terminal amino acids from various peptides. The protein is Probable cytosol aminopeptidase of Acinetobacter baumannii (strain AB307-0294).